Here is a 933-residue protein sequence, read N- to C-terminus: Dual 3',5'-cyclic-AMP and -GMP phosphodiesterase 11A (933 aa).

The segment at 42–121 is disordered; it reads HTSGQGASSL…LQRRASQKEL (80 aa). Phosphoserine is present on residues Ser-162, Ser-163, and Ser-239. GAF domains follow at residues 217–370 and 402–558; these read DLTS…GIAI and DLEK…GLGI. Position 424 (Ser-424) interacts with 3',5'-cyclic GMP. Residues 588-912 form the PDEase domain; that stretch reads SKAEVDKFKA…RKWEELHQKR (325 aa). The Proton donor role is filled by His-664. Positions 668, 704, 705, and 816 each coordinate a divalent metal cation. The interval 913-933 is disordered; that stretch reads LQVSAASPDPASPMVAGEDRL.

It belongs to the cyclic nucleotide phosphodiesterase family. The cofactor is a divalent metal cation. Expressed in testis and developing spermatoza.

The protein localises to the cytoplasm. It is found in the cytosol. It catalyses the reaction 3',5'-cyclic GMP + H2O = GMP + H(+). The catalysed reaction is 3',5'-cyclic AMP + H2O = AMP + H(+). Its activity is regulated as follows. Inhibited by 3-isobutyl-1-methylxanthine (IBMX), zaprinast and dipyridamole. cGMP acts as an allosteric activator. Its function is as follows. Plays a role in signal transduction by regulating the intracellular concentration of cyclic nucleotides cAMP and cGMP. Catalyzes the hydrolysis of both cAMP and cGMP to 5'-AMP and 5'-GMP, respectively. This Mus musculus (Mouse) protein is Dual 3',5'-cyclic-AMP and -GMP phosphodiesterase 11A (Pde11a).